The primary structure comprises 134 residues: Mini-ribonuclease 3 (134 aa).

Residue Asp22 is part of the active site.

Belongs to the MrnC RNase family. In terms of assembly, homodimer. Mg(2+) is required as a cofactor.

Its subcellular location is the cytoplasm. Involved in correct processing of both the 5' and 3' ends of 23S rRNA precursor. Processes 30S rRNA precursor transcript even in absence of ribonuclease 3 (Rnc); Rnc processes 30S rRNA into smaller rRNA precursors. This Staphylococcus aureus (strain NCTC 8325 / PS 47) protein is Mini-ribonuclease 3.